The sequence spans 153 residues: Biogenesis of lysosome-related organelles complex 1 subunit 1 (153 aa).

A compositionally biased stretch (basic and acidic residues) spans 1–11 (MAPGSRGERSS). Residues 1–27 (MAPGSRGERSSFRSRRGPGVPSPQPDV) are disordered. Residues 27–59 (VTMLSRLLKEHQAKQNERKELQEKRRREAITAA) adopt a coiled-coil conformation.

It belongs to the BLOC1S1 family. Component of the biogenesis of lysosome-related organelles complex 1 (BLOC-1) composed of BLOC1S1, BLOC1S2, BLOC1S3, BLOC1S4, BLOC1S5, BLOC1S6, DTNBP1/BLOC1S7 and SNAPIN/BLOC1S8. Octamer composed of one copy each BLOC1S1, BLOC1S2, BLOC1S3, BLOC1S4, BLOC1S5, BLOC1S6, DTNBP1/BLOC1S7 and SNAPIN/BLOC1S8. The BLOC-1 complex associates with the AP-3 protein complex and membrane protein cargos. Component of the BLOC-one-related complex (BORC) which is composed of BLOC1S1, BLOC1S2, BORCS5, BORCS6, BORCS7, BORCS8, KXD1 and SNAPIN. Interacts with ATP5F1A and NDUFA9; involved in their acetylation on lysine residues. Interacts with KXD1.

It is found in the mitochondrion intermembrane space. It localises to the mitochondrion matrix. The protein resides in the cytoplasm. Its subcellular location is the cytosol. The protein localises to the lysosome membrane. It catalyses the reaction L-lysyl-[protein] + acetyl-CoA = N(6)-acetyl-L-lysyl-[protein] + CoA + H(+). Component of the BLOC-1 complex, a complex that is required for normal biogenesis of lysosome-related organelles (LRO), such as platelet dense granules and melanosomes. In concert with the AP-3 complex, the BLOC-1 complex is required to target membrane protein cargos into vesicles assembled at cell bodies for delivery into neurites and nerve terminals. The BLOC-1 complex, in association with SNARE proteins, is also proposed to be involved in neurite extension. As part of the BORC complex may play a role in lysosomes movement and localization at the cell periphery. Associated with the cytosolic face of lysosomes, the BORC complex may recruit ARL8B and couple lysosomes to microtubule plus-end-directed kinesin motor. Functionally, acts as a protein acetyltransferase. Negatively regulates aerobic respiration through mitochondrial protein lysine-acetylation. May counteract the action of the deacetylase SIRT3 by acetylating and regulating proteins of the mitochondrial respiratory chain including ATP5F1A and NDUFA9. Acts as a regulator of mTORC2 signaling in response to hypotoxic stress by mediating acetylation of RICTOR, thereby protecting RICTOR against ubiquitination and subsequent degradation by the proteasome. This chain is Biogenesis of lysosome-related organelles complex 1 subunit 1 (BLOC1S1), found in Homo sapiens (Human).